The primary structure comprises 207 residues: Protein lin-7 homolog B (207 aa).

Residues Met-1–Asp-13 carry the Kinase interacting site motif. The L27 domain maps to Leu-10–Gly-65. The 83-residue stretch at Val-93–Pro-175 folds into the PDZ domain. The tract at residues Lys-187–Gly-207 is disordered. The segment covering His-198 to Gly-207 has biased composition (polar residues).

The protein belongs to the lin-7 family. In terms of assembly, forms a complex with CASK and CASKIN1. Component of the brain-specific heterotrimeric complex (LIN-10-LIN-2-LIN-7 complex) composed of at least APBA1, CASK, and LIN7, which associates with the motor protein KIF17 to transport vesicles along microtubules. Forms a heterotrimeric complex composed of MMP5, LIN7B and PATJ; the N-terminal L27 domain of PALS1 interacts with the L27 domain of PATJ and the C-terminal L27 domain of PALS1 interacts with the L27 domain of LIN7B. Forms a heterotrimeric complex with DLG1 and CASK via their L27 domains. Interacts with DLG4 and GRIN2B as well as CDH1 and CTNNB1, the channels KCNJ12/Kir2.2, KCNJ4/Kir2.3 and probably KCNJ2/Kir2.1 and SLC6A12/BGT-1 via its PDZ domain. The association of LIN7A with cadherin and beta-catenin is calcium-dependent, occurs at synaptic junctions and requires the actin cytoskeleton. Interacts with EGFR, ERBB2, ERBB3 and ERBB4 with both PDZ and KID domains. Associates with KIF17 via APBA1. Interacts with ASIC3. Interacts with TOPK. Interacts with RTKN. Interacts with APBA1. Interacts with MPP7. Interacts with DLG2. Interacts with DLG3. As to expression, expressed in the kidney; predominantly in the vasa recta.

The protein resides in the cell membrane. The protein localises to the basolateral cell membrane. Its subcellular location is the cell junction. It is found in the postsynaptic density membrane. It localises to the tight junction. Functionally, plays a role in establishing and maintaining the asymmetric distribution of channels and receptors at the plasma membrane of polarized cells. Forms membrane-associated multiprotein complexes that may regulate delivery and recycling of proteins to the correct membrane domains. The tripartite complex composed of LIN7 (LIN7A, LIN7B or LIN7C), CASK and APBA1 associates with the motor protein KIF17 to transport vesicles containing N-methyl-D-aspartate (NMDA) receptor subunit NR2B along microtubules. This complex may have the potential to couple synaptic vesicle exocytosis to cell adhesion in brain. Ensures the proper localization of GRIN2B (subunit 2B of the NMDA receptor) to neuronal postsynaptic density and may function in localizing synaptic vesicles at synapses where it is recruited by beta-catenin and cadherin. Required to localize Kir2 channels, GABA transporter (SLC6A12) and EGFR/ERBB1, ERBB2, ERBB3 and ERBB4 to the basolateral membrane of epithelial cells. May increase the amplitude of ASIC3 acid-evoked currents by stabilizing the channel at the cell surface. This chain is Protein lin-7 homolog B (Lin7b), found in Mus musculus (Mouse).